Consider the following 876-residue polypeptide: DNA mismatch repair protein MutS (876 aa).

626–633 is an ATP binding site; the sequence is GPNMGGKS.

This sequence belongs to the DNA mismatch repair MutS family.

In terms of biological role, this protein is involved in the repair of mismatches in DNA. It is possible that it carries out the mismatch recognition step. This protein has a weak ATPase activity. The protein is DNA mismatch repair protein MutS of Bordetella bronchiseptica (strain ATCC BAA-588 / NCTC 13252 / RB50) (Alcaligenes bronchisepticus).